Here is a 248-residue protein sequence, read N- to C-terminus: tRNA (guanine-N(1)-)-methyltransferase (248 aa).

Residues Gly-113 and 133–138 contribute to the S-adenosyl-L-methionine site; that span reads IGDYVL.

It belongs to the RNA methyltransferase TrmD family. As to quaternary structure, homodimer.

The protein localises to the cytoplasm. It catalyses the reaction guanosine(37) in tRNA + S-adenosyl-L-methionine = N(1)-methylguanosine(37) in tRNA + S-adenosyl-L-homocysteine + H(+). Its function is as follows. Specifically methylates guanosine-37 in various tRNAs. The polypeptide is tRNA (guanine-N(1)-)-methyltransferase (Shewanella denitrificans (strain OS217 / ATCC BAA-1090 / DSM 15013)).